The sequence spans 472 residues: 2-methylcitrate synthase, mitochondrial (472 aa).

The transit peptide at 1–29 directs the protein to the mitochondrion; that stretch reads MALNLTTSRRALGSLKPLTRAAFVGARGY. CoA-binding residues include R75 and K193. H271 serves as a coordination point for oxaloacetate. A CoA-binding site is contributed by L306. H307 is an active-site residue. CoA-binding residues include V348, G350, and Y351. Oxaloacetate is bound by residues H353 and R362. The active site involves H353. T402, K403, and N408 together coordinate CoA. D410 is an active-site residue. Oxaloacetate contacts are provided by R436 and R456.

This sequence belongs to the citrate synthase family. Homodimer.

It is found in the mitochondrion matrix. The catalysed reaction is propanoyl-CoA + oxaloacetate + H2O = (2S,3S)-2-methylcitrate + CoA + H(+). The enzyme catalyses oxaloacetate + acetyl-CoA + H2O = citrate + CoA + H(+). It participates in organic acid metabolism; propanoate degradation. In terms of biological role, component of the methylcitrate cycle that catalyzes the synthesis of (2S,3S)-2-methylcitrate from propionyl-CoA and oxaloacetate. Plays an important role in detoxification of propionyl-CoA, an inhibitor of both primary and secondary metabolism. Also has citrate synthase activity using as substrates acetyl-CoA and oxaloacetate. This is 2-methylcitrate synthase, mitochondrial from Fusarium solani (Filamentous fungus).